Consider the following 436-residue polypeptide: ATP-dependent protease ATPase subunit HslU (436 aa).

ATP is bound by residues Val18, 60–65 (GVGKTE), Asp249, Glu314, and Arg386.

It belongs to the ClpX chaperone family. HslU subfamily. As to quaternary structure, a double ring-shaped homohexamer of HslV is capped on each side by a ring-shaped HslU homohexamer. The assembly of the HslU/HslV complex is dependent on binding of ATP.

The protein resides in the cytoplasm. ATPase subunit of a proteasome-like degradation complex; this subunit has chaperone activity. The binding of ATP and its subsequent hydrolysis by HslU are essential for unfolding of protein substrates subsequently hydrolyzed by HslV. HslU recognizes the N-terminal part of its protein substrates and unfolds these before they are guided to HslV for hydrolysis. The polypeptide is ATP-dependent protease ATPase subunit HslU (Rhizobium rhizogenes (strain K84 / ATCC BAA-868) (Agrobacterium radiobacter)).